Reading from the N-terminus, the 272-residue chain is NH(3)-dependent NAD(+) synthetase (272 aa).

ATP is bound at residue 45-52; that stretch reads GISGGQDS. D51 is a Mg(2+) binding site. R138 is a binding site for deamido-NAD(+). Residue T158 participates in ATP binding. E163 serves as a coordination point for Mg(2+). 2 residues coordinate deamido-NAD(+): K171 and D178. Positions 187 and 209 each coordinate ATP. Deamido-NAD(+) is bound at residue 258–259; that stretch reads HK.

The protein belongs to the NAD synthetase family. As to quaternary structure, homodimer.

The enzyme catalyses deamido-NAD(+) + NH4(+) + ATP = AMP + diphosphate + NAD(+) + H(+). It participates in cofactor biosynthesis; NAD(+) biosynthesis; NAD(+) from deamido-NAD(+) (ammonia route): step 1/1. Functionally, catalyzes the ATP-dependent amidation of deamido-NAD to form NAD. Uses ammonia as a nitrogen source. This chain is NH(3)-dependent NAD(+) synthetase, found in Bacillus licheniformis (strain ATCC 14580 / DSM 13 / JCM 2505 / CCUG 7422 / NBRC 12200 / NCIMB 9375 / NCTC 10341 / NRRL NRS-1264 / Gibson 46).